The primary structure comprises 506 residues: Probable cytochrome P450 309a1 (506 aa).

A phosphothreonine mark is found at Thr75, Thr78, and Thr81. Residue Cys452 participates in heme binding.

It belongs to the cytochrome P450 family. Heme is required as a cofactor.

It is found in the endoplasmic reticulum membrane. The protein resides in the microsome membrane. In terms of biological role, may be involved in the metabolism of insect hormones and in the breakdown of synthetic insecticides. This Drosophila melanogaster (Fruit fly) protein is Probable cytochrome P450 309a1 (Cyp309a1).